Here is a 384-residue protein sequence, read N- to C-terminus: Flap endonuclease 1 (384 aa).

Residues 1–105 (MGIKGLTKLL…GELAKRKDKR (105 aa)) form an N-domain region. Residue Asp-34 participates in Mg(2+) binding. Arg-71 contributes to the DNA binding site. Residues Asp-87, Glu-159, Glu-161, Asp-180, and Asp-182 each contribute to the Mg(2+) site. Residues 123 to 254 (EIEKLSKRTV…VNALKYIKQY (132 aa)) are I-domain. Residue Glu-159 coordinates DNA. DNA contacts are provided by Gly-232 and Asp-234. A Mg(2+)-binding site is contributed by Asp-234. The interaction with PCNA stretch occupies residues 337-345 (GQNRLETFF). Residues 353–384 (STVGKRKEPEKGKGKFGAAGGKKSKGVTKRKF) form a disordered region. The span at 374 to 384 (KKSKGVTKRKF) shows a compositional bias: basic residues.

It belongs to the XPG/RAD2 endonuclease family. FEN1 subfamily. In terms of assembly, interacts with PCNA. Three molecules of FEN1 bind to one PCNA trimer with each molecule binding to one PCNA monomer. PCNA stimulates the nuclease activity without altering cleavage specificity. Requires Mg(2+) as cofactor. Phosphorylated. Phosphorylation upon DNA damage induces relocalization to the nuclear plasma.

The protein localises to the nucleus. It is found in the nucleolus. The protein resides in the nucleoplasm. Its subcellular location is the mitochondrion. Its function is as follows. Structure-specific nuclease with 5'-flap endonuclease and 5'-3' exonuclease activities involved in DNA replication and repair. During DNA replication, cleaves the 5'-overhanging flap structure that is generated by displacement synthesis when DNA polymerase encounters the 5'-end of a downstream Okazaki fragment. It enters the flap from the 5'-end and then tracks to cleave the flap base, leaving a nick for ligation. Also involved in the long patch base excision repair (LP-BER) pathway, by cleaving within the apurinic/apyrimidinic (AP) site-terminated flap. Acts as a genome stabilization factor that prevents flaps from equilibrating into structures that lead to duplications and deletions. Also possesses 5'-3' exonuclease activity on nicked or gapped double-stranded DNA, and exhibits RNase H activity. Also involved in replication and repair of rDNA and in repairing mitochondrial DNA. The protein is Flap endonuclease 1 of Micromonas commoda (strain RCC299 / NOUM17 / CCMP2709) (Picoplanktonic green alga).